Here is a 128-residue protein sequence, read N- to C-terminus: Large ribosomal subunit protein bL17 (128 aa).

Belongs to the bacterial ribosomal protein bL17 family. In terms of assembly, part of the 50S ribosomal subunit. Contacts protein L32.

The sequence is that of Large ribosomal subunit protein bL17 from Streptococcus uberis (strain ATCC BAA-854 / 0140J).